Consider the following 296-residue polypeptide: Undecaprenyl-diphosphatase (296 aa).

A run of 7 helical transmembrane segments spans residues 48 to 68 (SAFT…AWVF), 104 to 124 (LTLW…LLFD), 131 to 151 (LFSV…MIFA), 167 to 187 (ITFF…WPGF), 208 to 228 (SDFT…LSLV), 237 to 257 (SHIP…LLSI), and 272 to 292 (FAIY…GFGI).

It belongs to the UppP family.

Its subcellular location is the cell membrane. The catalysed reaction is di-trans,octa-cis-undecaprenyl diphosphate + H2O = di-trans,octa-cis-undecaprenyl phosphate + phosphate + H(+). Functionally, catalyzes the dephosphorylation of undecaprenyl diphosphate (UPP). Confers resistance to bacitracin. This Staphylococcus carnosus (strain TM300) protein is Undecaprenyl-diphosphatase.